We begin with the raw amino-acid sequence, 2037 residues long: Fatty acid synthase subunit beta (2037 aa).

An acetyltransferase region spans residues 1–453; it reads MSTHRPFQLT…VYDTFDGSDF (453 aa). Catalysis depends on S261, which acts as the For acetyltransferase activity. The enoyl reductase stretch occupies residues 465 to 798; that stretch reads VKLITELPVH…GSRVMTSKES (334 aa). A dehydratase region spans residues 1132 to 1612; that stretch reads GTELNWLQAF…LPNDTLQTTM (481 aa). The region spanning 1506–1634 is the MaoC-like domain; the sequence is NGKTIEESVI…KVETRNVETE (129 aa). Residues 1613-1833 are malonyl/palmitoyl transferase; that stretch reads EHVGMINGRK…MTMQVAVPRD (221 aa). S1796 acts as the For malonyltransferase activity in catalysis.

The protein belongs to the fungal fatty acid synthetase subunit beta family. In terms of assembly, [Alpha(6)beta(6)] hexamers of two multifunctional subunits (alpha and beta).

It carries out the reaction acetyl-CoA + n malonyl-CoA + 2n NADPH + 4n H(+) = a long-chain-acyl-CoA + n CoA + n CO2 + 2n NADP(+).. It catalyses the reaction holo-[ACP] + acetyl-CoA = acetyl-[ACP] + CoA. The enzyme catalyses holo-[ACP] + malonyl-CoA = malonyl-[ACP] + CoA. The catalysed reaction is a (3R)-hydroxyacyl-[ACP] = a (2E)-enoyl-[ACP] + H2O. It carries out the reaction a 2,3-saturated acyl-[ACP] + NAD(+) = a (2E)-enoyl-[ACP] + NADH + H(+). It catalyses the reaction (9Z)-octadecenoyl-[ACP] + H2O = (9Z)-octadecenoate + holo-[ACP] + H(+). In terms of biological role, fatty acid synthetase catalyzes the formation of long-chain fatty acids from acetyl-CoA, malonyl-CoA and NADPH. The beta subunit contains domains for: [acyl-carrier-protein] acetyltransferase and malonyltransferase, S-acyl fatty acid synthase thioesterase, enoyl-[acyl-carrier-protein] reductase, and 3-hydroxypalmitoyl-[acyl-carrier-protein] dehydratase. In Candida albicans (Yeast), this protein is Fatty acid synthase subunit beta (FAS1).